Here is a 411-residue protein sequence, read N- to C-terminus: Protrudin (411 aa).

Positions 1–27 are disordered; the sequence is MQTSEREGSGPELSPSVMPEAPLESPP. Topologically, residues 1-66 are cytoplasmic; it reads MQTSEREGSG…AGDGVRYLLR (66 aa). The interval 1 to 92 is sufficient for homooligomerization; that stretch reads MQTSEREGSG…LFLTLNEGAW (92 aa). A sufficient for localization to endoplasmic reticulum tubular network and for interactions with REEP1, REEP5, ATL1, ATL2, ATL3 and SPAST region spans residues 1–205; sequence MQTSEREGSG…LYLLPLCWVL (205 aa). The tract at residues 51 to 64 is necessary for interaction with RAB11A and function in neurite outgrowth; the sequence is LEPLKDAGDGVRYL. Residues 67–87 traverse the membrane as a helical segment; sequence WQMPLCSLLTCLGLNVLFLTL. A topological domain (lumenal) is located at residue Asn88. The helical transmembrane segment at 89–109 threads the bilayer; it reads EGAWYSVGALMISVPALLGYL. Residues 110–187 lie on the Cytoplasmic side of the membrane; it reads QEVCRARLPE…NPVVSSQFYG (78 aa). Positions 188–208 form an intramembrane region, helical; sequence ALLGTICMLYLLPLCWVLTLL. Topologically, residues 209 to 411 are cytoplasmic; that stretch reads NSTLFLGNVE…CASCNQTLSK (203 aa). A disordered region spans residues 234–286; the sequence is MNPKQEEHAFESPPPPDVGGKGGLMDSTPALTPTEDLTPGSVEEAEEAEPDEE. The necessary for interaction with KIF5A stretch occupies residues 271-361; that stretch reads TPGSVEEAEE…GCSATFSVLK (91 aa). Residues 276–286 show a composition bias toward acidic residues; sequence EEAEEAEPDEE. A necessary for interaction with VAPA region spans residues 286–292; sequence EFKDAIE. Residues 344–410 form an FYVE-type zinc finger; the sequence is TNNFGNCTGC…VCASCNQTLS (67 aa). The Zn(2+) site is built by Cys350, Cys353, Cys366, Cys369, Cys374, Cys377, Cys402, and Cys405.

In terms of assembly, can form homooligomers (monomers, dimers and tetramers). Interacts with RAB11A (GDP-bound form); regulates RAB11A. Interacts with FKBP8; may negatively regulate ZFYVE27 phosphorylation. Interacts with VAPA (via MSP domain); may regulate ZFYVE27 retention in the endoplasmic reticulum and its function in cell projections formation. Interacts with VAPB (via MSP domain). Interacts with RAB11B (GDP-bound form), REEP1, REEP5, ATL1, ATL2, ATL3, SPAST, SURF4, KIF5A, KIF5B, KIF5C and RTN3. In terms of processing, phosphorylated. Phosphorylation is induced by NGF through the MAPK/ERK pathway and modulates interaction with RAB11A.

The protein localises to the recycling endosome membrane. The protein resides in the endoplasmic reticulum membrane. Its subcellular location is the cell projection. It is found in the growth cone membrane. In terms of biological role, key regulator of RAB11-dependent vesicular trafficking during neurite extension through polarized membrane transport. Promotes axonal elongation and contributes to the establishment of neuronal cell polarity. Involved in nerve growth factor-induced neurite formation in VAPA-dependent manner. Contributes to both the formation and stabilization of the tubular ER network. Involved in ER morphogenesis by regulating the sheet-to-tubule balance and possibly the density of tubule interconnections. Acts as an adapter protein that facilitates the interaction of KIF5A with VAPA, VAPB, SURF4, RAB11A, RAB11B and RTN3 and the ZFYVE27-KIF5A complex contributes to the transport of these proteins in neurons. Can induce formation of neurite-like membrane protrusions in non-neuronal cells in a KIF5A/B-dependent manner. The chain is Protrudin (ZFYVE27) from Pongo abelii (Sumatran orangutan).